A 432-amino-acid chain; its full sequence is 3-phosphoshikimate 1-carboxyvinyltransferase (432 aa).

3-phosphoshikimate-binding residues include lysine 25, serine 26, and arginine 30. Residue lysine 25 participates in phosphoenolpyruvate binding. 2 residues coordinate phosphoenolpyruvate: glycine 97 and arginine 125. Serine 170, glutamine 172, aspartate 318, and lysine 345 together coordinate 3-phosphoshikimate. Glutamine 172 provides a ligand contact to phosphoenolpyruvate. Aspartate 318 (proton acceptor) is an active-site residue. Arginine 349 and arginine 393 together coordinate phosphoenolpyruvate.

The protein belongs to the EPSP synthase family. Monomer.

The protein resides in the cytoplasm. The catalysed reaction is 3-phosphoshikimate + phosphoenolpyruvate = 5-O-(1-carboxyvinyl)-3-phosphoshikimate + phosphate. The protein operates within metabolic intermediate biosynthesis; chorismate biosynthesis; chorismate from D-erythrose 4-phosphate and phosphoenolpyruvate: step 6/7. Catalyzes the transfer of the enolpyruvyl moiety of phosphoenolpyruvate (PEP) to the 5-hydroxyl of shikimate-3-phosphate (S3P) to produce enolpyruvyl shikimate-3-phosphate and inorganic phosphate. The protein is 3-phosphoshikimate 1-carboxyvinyltransferase of Geobacillus thermodenitrificans (strain NG80-2).